The following is a 473-amino-acid chain: MEGKGPSFKVIIVGASVTGLTLAHCLHRAGIDYVVLEKHHEVHPPIGAAVAILPNGGRIMEQLGIFRHIEDRCQPFQRVHLCFQDGFYYDSLSPSVVLKRFGLKFAALERTQLLEILYTHLPDKSRVLTSKGVVRITPHGNKMSVTTADGDEFQGDLVVGADGVHSVTRREMWRIANIEQPGLIPFKEQASMSVEFSCIFGMSNPIPGRKHWQHIIRIGPGFTFLIFPAAGDSLFWVLIEKLPHKYIYPDVPRFSQEDAVTRCEAAASQPVWQEVRFRDIWAQRRGFRMVALEENLFRTWHHGRIICIGDSISKMTPNIGQGANTAIEAAAGLANVIYAITQNHHQPSDDTIHRALANFSERHRKRLDAIHLESRWITRLEACQGWVVTAFTRYVAPHCGDLFALGVVRNSYNGEVLQFLPLTERSGKHWPKLEWWNTWGLSKWQEFGERLVYCFGVVILLWISWAVFNVNQL.

Positions 37, 51, and 110 each coordinate FAD. The helical transmembrane segment at 218–238 threads the bilayer; it reads IGPGFTFLIFPAAGDSLFWVL. FAD contacts are provided by Asp310 and Ala323. Residue Asn358 is glycosylated (N-linked (GlcNAc...) asparagine). Residues 451 to 471 traverse the membrane as a helical segment; it reads LVYCFGVVILLWISWAVFNVN.

This sequence belongs to the paxM FAD-dependent monooxygenase family. It depends on FAD as a cofactor.

It is found in the membrane. Its pathway is mycotoxin biosynthesis. FAD-dependent monooxygenase; part of the gene cluster that mediates the biosynthesis of citreoviridin, an inhibitor of the of F1-ATPase beta-subunit. The HR-PKS ctvA accepts acetyl-CoA as the starter unit and catalyzes eight iterations of malonyl-CoA extension and four iterations of SAM-dependent methylation at C4, C12, C14, and C16. The KR and DH domains selectively act on the first six iterations to generate the hexaene chain. In the last three iterations, the KR and DH domains terminate their functions to yield a beta,delta-diketo ester moiety, which then undergoes intramolecular cyclization to yield an alpha-pyrone intermediate. Subsequently, ctvB methylates the alpha-pyrone hydroxyl group to generate citreomontanin. In order to form the tetrahydrofuran ring with the correct stereochemistry, the terminal alkenes of citreomontanin need to undergo isomerization to yield a (17Z)-hexaene, a step that could be catalyzed by ctvC. The (17Z)-hexaene then undergoes bisepoxidation by ctvC to form a (17R,16R,15S,14R)-bisepoxide moiety. Lastly, ctvD acts as a regioselective hydrolase to form the tetrahydrofuran ring with the substituents in the correct absolute configuration, completing the biosynthesis of citreoviridin. In Aspergillus terreus (strain NIH 2624 / FGSC A1156), this protein is FAD-dependent monooxygenase ctvC.